The chain runs to 196 residues: DNA polymerase epsilon subunit D (196 aa).

The segment at 125–196 (RKKEKLDSGE…ETRVQNLEQT (72 aa)) is disordered. Positions 133–143 (GEVDADGDIDM) are enriched in acidic residues. The segment covering 144 to 159 (GEDKENVPVEKVKEHD) has biased composition (basic and acidic residues). Over residues 160-173 (EIEEQGDALQDVEE) the composition is skewed to acidic residues. Over residues 174–188 (SSEKKQKTESQDVET) the composition is skewed to basic and acidic residues. Residue Ser183 is modified to Phosphoserine; by ATM or ATR.

In terms of assembly, DNA polymerase epsilon is a heterotetramer consisting of POL2, DPB2, DPB3 and DPB4. Component of the ISW2 complex, which at least consists of ISW2, ITC1, DLS1 and DPB4.

It is found in the nucleus. Its function is as follows. As accessory component of the DNA polymerase epsilon (DNA polymerase II) participates in chromosomal DNA replication. It is required during synthesis of the leading and lagging DNA strands at the replication fork and binds at/or near replication origins and moves along DNA with the replication fork. It has 3'-5' proofreading exonuclease activity that correct errors arising during DNA replication. It is also involved in DNA synthesis during DNA repair. Also functions as a component of the ISW2 complex, which acts in remodeling the chromatin by catalyzing an ATP-dependent alteration in the structure of nucleosomal DNA. The ISW2 complex is involved in coordinating transcriptional repression and in inheritance of telomeric silencing. It is involved in repression of MAT a-specific genes, INO1, and early meiotic genes during mitotic growth dependent upon transcription factor UME6 and in a parallel pathway to the RPD3-SIN3 histone deacetylase complex. The polypeptide is DNA polymerase epsilon subunit D (DPB4) (Saccharomyces cerevisiae (strain ATCC 204508 / S288c) (Baker's yeast)).